A 182-amino-acid polypeptide reads, in one-letter code: 5-formyltetrahydrofolate cyclo-ligase (182 aa).

The disordered stretch occupies residues 1 to 21 (MIRQRRRALTPEQQQEMGQQA). Residues 11-21 (PEQQQEMGQQA) are compositionally biased toward polar residues. ATP-binding positions include 128 to 135 (GMGGGFYD) and D167.

Belongs to the 5-formyltetrahydrofolate cyclo-ligase family.

The enzyme catalyses (6S)-5-formyl-5,6,7,8-tetrahydrofolate + ATP = (6R)-5,10-methenyltetrahydrofolate + ADP + phosphate. Its pathway is one-carbon metabolism; tetrahydrofolate interconversion. Functionally, involved in the removal of 5-formyltetrahydrofolate. In vitro, it is a potent inhibitor of various folate-dependent enzymes in the C1 metabolism network and in vivo it might function as a folate storage. 5-formyltetrahydrofolate is also used as an antifolate rescue agent in cancer chemotherapy. Catalyzes the irreversible ATP-dependent transformation of 5-formyltetrahydrofolate (5-CHO-THF) to form 5,10-methenyltetrahydrofolate (5,10-CH=THF). The reverse reaction is catalyzed by the serine hydroxymethyltransferase GlyA (SHMT). The protein is 5-formyltetrahydrofolate cyclo-ligase (ygfA) of Escherichia coli O157:H7.